A 687-amino-acid chain; its full sequence is Protein SDA1 homolog (687 aa).

A phosphoserine mark is found at S232, S234, and S236. The stretch at 254 to 315 forms a coiled coil; it reads KKGSKNKKKL…SCKERFEVKM (62 aa). Positions 484–509 are disordered; sequence LEKGENTEDDEDGWESASLSEEEEED. Positions 490–509 are enriched in acidic residues; it reads TEDDEDGWESASLSEEEEED. T552 carries the post-translational modification Phosphothreonine. Phosphoserine occurs at positions 585, 589, and 595. A disordered region spans residues 604–651; sequence KKPKSDKETRLATAMAGRTDRKEFVRKKTKINPFSSSTNKEKKKQKNF.

It belongs to the SDA1 family.

Its subcellular location is the nucleus. The protein localises to the nucleolus. In terms of biological role, required for 60S pre-ribosomal subunits export to the cytoplasm. This chain is Protein SDA1 homolog (Sdad1), found in Mus musculus (Mouse).